The chain runs to 524 residues: Cytochrome P450 704B1 (524 aa).

A helical transmembrane segment spans residues S2 to Q22. Residue C471 participates in heme binding.

This sequence belongs to the cytochrome P450 family. Heme is required as a cofactor.

It is found in the membrane. The catalysed reaction is an omega-methyl-long-chain fatty acid + reduced [NADPH--hemoprotein reductase] + O2 = an omega-hydroxy-long-chain fatty acid + oxidized [NADPH--hemoprotein reductase] + H2O + H(+). Functionally, involved in pollen wall development. Catalyzes the conversion of long-chain fatty acids to the corresponding omega-hydroxylated fatty acids. Omega-hydroxylated fatty acids, together with in-chain hydroxylated fatty acids, are key monomeric aliphatic building blocks for sporopollenin synthesis during exine formation. The chain is Cytochrome P450 704B1 (CYP704B1) from Arabidopsis thaliana (Mouse-ear cress).